Here is an 862-residue protein sequence, read N- to C-terminus: Putative PIP5K1A and PSMD4-like protein (862 aa).

The PIPK domain occupies 28 to 396 (TSSALKGAIQ…WFQRFMCNTV (369 aa)). 2 disordered regions span residues 404-424 (PSPS…GSSG) and 453-481 (HLGC…PSFS). Positions 412 to 424 (SGSSFSQRAGSSG) are enriched in low complexity. The VWFA domain maps to 490–673 (MLTTSVDNSE…LADALISFPI (184 aa)). The UIM 1 domain maps to 696–715 (SADPELALVLRVFMEEQRQR). Positions 716–740 (QEEEARQAAAASAAEAGIATTGTED) are disordered. Positions 722 to 731 (QAAAASAAEA) are enriched in low complexity. The region spanning 766 to 783 (MTEEEKIVCAMQMSLQGA) is the UIM 2 domain. Positions 826-862 (NLPGVDPNNEAIRNAVGSLASQATKDSKKDKKEEDKK) are disordered. Positions 850-862 (KDSKKDKKEEDKK) are enriched in basic and acidic residues.

As to expression, testis-specific.

It is found in the cytoplasm. Has negligible PIP5 kinase activity. Binds to ubiquitinated proteins. This Homo sapiens (Human) protein is Putative PIP5K1A and PSMD4-like protein (PIPSL).